The primary structure comprises 1845 residues: Histone-lysine N-methyltransferase, H3 lysine-79 specific (1845 aa).

The segment covering 1–44 (MSTNSTPRKQKLSNSKSLQNSPISPTVKKTNSFPLGNNIPTNIN) has biased composition (polar residues). Disordered regions lie at residues 1 to 67 (MSTN…NGIG), 83 to 306 (PPLP…NKWT), 450 to 470 (SHDI…NKNK), 486 to 571 (QKLK…TERK), 585 to 681 (RKER…NDSY), 741 to 767 (GETF…KKIE), 862 to 881 (QTTK…AETE), and 963 to 1102 (KDNP…SNSL). Low complexity-rich tracts occupy residues 52–67 (NNSN…NGIG), 90–162 (SSSS…QQEP), 191–226 (PSTP…SNNS), and 239–263 (NNNN…NNNN). Positions 268 to 280 (VIDDDDDDDDDEG) are enriched in acidic residues. The span at 282 to 294 (SIKSTHTSTQSTP) shows a compositional bias: polar residues. The segment covering 295-304 (IRDRRQRDNK) has biased composition (basic and acidic residues). The span at 453–464 (INNNNNNNNNNK) shows a compositional bias: low complexity. The span at 585–679 (RKERERKERK…IEKERREKND (95 aa)) shows a compositional bias: basic and acidic residues. Positions 625–639 (KKKEKEKEKEKEKEK) are required for interaction with nucleosomes and DNA. Composition is skewed to low complexity over residues 750–763 (NNNN…NNNN), 862–877 (QTTK…TTTT), 972–1011 (NNNR…RNNN), and 1020–1067 (NNNN…NNTI). Over residues 1069 to 1080 (KKIETIKKDINK) the composition is skewed to basic and acidic residues. The span at 1084-1102 (KTTTTTSSSSSSTSSSNSL) shows a compositional bias: low complexity. The 322-residue stretch at 1125-1446 (FDVGIGVPVT…KDSDIVTDQT (322 aa)) folds into the DOT1 domain. S-adenosyl-L-methionine is bound by residues 1251–1254 (YGEA), 1274–1283 (FCDIGCGIGN), and Glu-1300. Disordered regions lie at residues 1463–1559 (LQLF…NKPI), 1610–1661 (RISP…SSND), 1735–1762 (HQKS…KKEQ), 1772–1791 (NYNN…NHNN), and 1799–1845 (TDLI…DNNK). Low complexity-rich tracts occupy residues 1467–1522 (SSSS…TPNS), 1541–1556 (NNNN…NSNN), and 1610–1642 (RISP…SSSD). The span at 1643-1656 (NENDDDNGDDEDDS) shows a compositional bias: acidic residues. A compositionally biased stretch (basic residues) spans 1745 to 1759 (RLSRKQKKLAKKNKK). 2 stretches are compositionally biased toward low complexity: residues 1799–1817 (TDLI…INND) and 1835–1845 (KDYNNINDNNK).

Belongs to the class I-like SAM-binding methyltransferase superfamily. DOT1 family.

It is found in the nucleus. It catalyses the reaction L-lysyl(79)-[histone H3] + 3 S-adenosyl-L-methionine = N(6),N(6),N(6)-trimethyl-L-lysyl(79)-[histone H3] + 3 S-adenosyl-L-homocysteine + 3 H(+). In terms of biological role, histone methyltransferase that specifically methylates histone H3 to form H3K79me. This methylation is required for telomere silencing, correct growth and development, and for resistance to DNA damage induced by UV LIGHT. This chain is Histone-lysine N-methyltransferase, H3 lysine-79 specific, found in Dictyostelium discoideum (Social amoeba).